Here is a 529-residue protein sequence, read N- to C-terminus: MPPPHRVFALPRQQSLLLPAVINPFVHDLSLSTADITKCFLLGIILVPLRAIFLLLVLLVMWPVSVIITFGQSLKGVVEPMTGWRRFLHRRVMTFLGRMYFFGMGFKVVVKGKKASTLEAPILAVAPHSSFFDAIACIESGLPSTVSRIESLEAPIFGRFLRCVQPVLVSRTDPDSRRNTIIEIERRAKSGGHWPQVLIFPEGTCTNRSCLITFKQGGFVPGVPVQPVLIRYPNKLDTVTWTWQGPKSARLLLLTLCQLCTTVEVEFLPPQVPTEMEKKCPLKFAQSVRAVMAKSLKLPVTDHTYEDCRLMIAAGELTLPMEAGLVEFTKISRKLELKWDNVKKELESFANIACSCKGGRITVEEFASFLKLPISPALQQLFALFDRNGDGTIDFREYVIGVTVLCRPANNEEVIQTAFKLFDIDEDNCITQEEFSSLLRSALGVCDLDVHSLFREIDADGSGHITYDEFRSFALNHPEYAKLFTTYIELQRYQGLQGDETDFDSAFSHCCTAAYDEYQEDSASDKKDD.

The Cytoplasmic segment spans residues 1 to 50; sequence MPPPHRVFALPRQQSLLLPAVINPFVHDLSLSTADITKCFLLGIILVPLR. Residues 51–71 traverse the membrane as a helical; Signal-anchor for type II membrane protein segment; sequence AIFLLLVLLVMWPVSVIITFG. The Lumenal portion of the chain corresponds to 72–529; sequence QSLKGVVEPM…EDSASDKKDD (458 aa). Residues 128 to 133 carry the HXXXXD motif motif; that stretch reads HSSFFD. The short motif at 202-205 is the EGTC motif element; it reads EGTC. An N-linked (GlcNAc...) asparagine glycan is attached at Asn-207. EF-hand domains follow at residues 373–408, 410–445, and 449–480; these read PISPALQQLFALFDRNGDGTIDFREYVIGVTVLCRP, NNEEVIQTAFKLFDIDEDNCITQEEFSSLLRSALGV, and DVHSLFREIDADGSGHITYDEFRSFALNHPEY. 15 residues coordinate Ca(2+): Asp-386, Asn-388, Asp-390, Thr-392, Glu-397, Asp-423, Asp-425, Asp-427, Cys-429, Glu-434, Asp-458, Asp-460, Ser-462, His-464, and Glu-469.

This sequence belongs to the 1-acyl-sn-glycerol-3-phosphate acyltransferase family.

Its subcellular location is the endoplasmic reticulum membrane. The protein resides in the golgi apparatus membrane. It is found in the cell membrane. It localises to the lipid droplet. The catalysed reaction is a 1-acyl-sn-glycero-3-phosphocholine + an acyl-CoA = a 1,2-diacyl-sn-glycero-3-phosphocholine + CoA. It carries out the reaction a 1-O-alkyl-sn-glycero-3-phosphocholine + acetyl-CoA = a 1-O-alkyl-2-acetyl-sn-glycero-3-phosphocholine + CoA. It catalyses the reaction a 1-acyl-sn-glycero-3-phosphate + an acyl-CoA = a 1,2-diacyl-sn-glycero-3-phosphate + CoA. The enzyme catalyses a 1-O-(1Z-alkenyl)-sn-glycero-3-phosphocholine + an acyl-CoA = a 1-O-(1Z-alkenyl)-2-acyl-sn-glycero-3-phosphocholine + CoA. The catalysed reaction is 1-hexadecanoyl-sn-glycero-3-phosphate + (9Z)-octadecenoyl-CoA = 1-hexadecanoyl-2-(9Z-octadecenoyl)-sn-glycero-3-phosphate + CoA. It carries out the reaction 1-(9Z-octadecenoyl)-sn-glycero-3-phosphate + (9Z)-octadecenoyl-CoA = 1,2-di-(9Z-octadecenoyl)-sn-glycero-3-phosphate + CoA. It catalyses the reaction 1-(9Z-octadecenoyl)-sn-glycero-3-phosphate + hexadecanoyl-CoA = 1-(9Z)-octadecenoyl-2-hexadecanoyl-sn-glycero-3-phosphate + CoA. The enzyme catalyses 1-heptadecanoyl-sn-glycero-3-phosphate + (9Z)-octadecenoyl-CoA = 1-heptadecanoyl-2-(9Z)-octadecenoyl-sn-glycero-3-phosphate + CoA. The catalysed reaction is 1-octadecanoyl-sn-glycero-3-phosphate + (9Z)-octadecenoyl-CoA = 1-octadecanoyl-2-(9Z-octadecenoyl)-sn-glycero-3-phosphate + CoA. It carries out the reaction heptadecanoyl-CoA + 1-(9Z-octadecenoyl)-sn-glycero-3-phosphate = 1-(9Z)-octadecenoyl-2-heptadecanoyl-sn-glycero-3-phosphate + CoA. It catalyses the reaction 1-(9Z-octadecenoyl)-sn-glycero-3-phosphate + (9Z,12Z)-octadecadienoyl-CoA = 1-(9Z)-octadecenoyl-2-(9Z,12Z)-octadecadienoyl-sn-glycero-3-phosphate + CoA. The enzyme catalyses 1-(9Z-octadecenoyl)-sn-glycero-3-phosphate + tetradecanoyl-CoA = 1-(9Z)-octadecenoyl-2-tetradecanoyl-sn-glycero-3-phosphate + CoA. The catalysed reaction is pentadecanoyl-CoA + 1-(9Z-octadecenoyl)-sn-glycero-3-phosphate = 1-(9Z)-octadecenoyl-2-pentadecanoyl-sn-glycero-3-phosphate + CoA. It carries out the reaction nonadecanoyl-CoA + 1-(9Z-octadecenoyl)-sn-glycero-3-phosphate = 1-(9Z)-octadecenoyl-2-nonadecanoyl-sn-glycero-3-phosphate + CoA. It catalyses the reaction 1-hexadecanoyl-sn-glycero-3-phosphocholine + (9Z)-octadecenoyl-CoA = 1-hexadecanoyl-2-(9Z-octadecenoyl)-sn-glycero-3-phosphocholine + CoA. The enzyme catalyses 1-O-hexadecyl-sn-glycero-3-phosphocholine + acetyl-CoA = 1-O-hexadecyl-2-acetyl-sn-glycero-3-phosphocholine + CoA. The catalysed reaction is 1-O-octadecyl-sn-glycero-3-phosphocholine + acetyl-CoA = 1-O-octadecyl-2-acetyl-sn-glycero-3-phosphocholine + CoA. It carries out the reaction 1-hexadecanoyl-sn-glycero-3-phosphocholine + acetyl-CoA = 1-hexadecanoyl-2-acetyl-sn-glycero-3-phosphocholine + CoA. It catalyses the reaction 1-octadecanoyl-sn-glycero-3-phosphocholine + acetyl-CoA = 1-octadecanoyl-2-acetyl-sn-glycero-3-phosphocholine + CoA. The enzyme catalyses a 1-O-(1Z-alkenyl)-sn-glycero-3-phosphocholine + acetyl-CoA = 1-O-(1Z)-alkenyl-2-acetyl-sn-glycero-3-phosphocholine + CoA. The catalysed reaction is 1-O-octadecyl-sn-glycero-3-phosphocholine + (5Z,8Z,11Z,14Z)-eicosatetraenoyl-CoA = 1-O-octadecyl-2-(5Z,8Z,11Z,14Z)-eicosatetraenoyl-sn-glycero-3-phosphocholine + CoA. The protein operates within lipid metabolism; phospholipid metabolism. Exhibits both acyltransferase and acetyltransferase activities. Activity is calcium-dependent. Catalyzes the conversion of lysophosphatidylcholine (1-acyl-sn-glycero-3-phosphocholine or LPC) into phosphatidylcholine (1,2-diacyl-sn-glycero-3-phosphocholine or PC). Catalyzes the conversion 1-acyl-sn-glycerol-3-phosphate (lysophosphatidic acid or LPA) into 1,2-diacyl-sn-glycerol-3-phosphate (phosphatidic acid or PA) by incorporating an acyl moiety at the sn-2 position of the glycerol backbone. Involved in platelet-activating factor (PAF) biosynthesis by catalyzing the conversion of the PAF precursor, 1-O-alkyl-sn-glycero-3-phosphocholine (lyso-PAF) into 1-O-alkyl-2-acetyl-sn-glycero-3-phosphocholine (PAF). The protein is Lysophosphatidylcholine acyltransferase 2 (lpcat2) of Danio rerio (Zebrafish).